An 86-amino-acid polypeptide reads, in one-letter code: Large ribosomal subunit protein uL23 (86 aa).

The protein belongs to the universal ribosomal protein uL23 family. In terms of assembly, part of the 50S ribosomal subunit. Contacts protein L29.

Its function is as follows. Binds to 23S rRNA. One of the proteins that surrounds the polypeptide exit tunnel on the outside of the ribosome. This is Large ribosomal subunit protein uL23 from Methanothermobacter thermautotrophicus (strain ATCC 29096 / DSM 1053 / JCM 10044 / NBRC 100330 / Delta H) (Methanobacterium thermoautotrophicum).